The sequence spans 101 residues: Small ribosomal subunit protein uS14 (101 aa).

It belongs to the universal ribosomal protein uS14 family. Part of the 30S ribosomal subunit. Contacts proteins S3 and S10.

In terms of biological role, binds 16S rRNA, required for the assembly of 30S particles and may also be responsible for determining the conformation of the 16S rRNA at the A site. In Beijerinckia indica subsp. indica (strain ATCC 9039 / DSM 1715 / NCIMB 8712), this protein is Small ribosomal subunit protein uS14.